Here is a 90-residue protein sequence, read N- to C-terminus: uncharacterized protein (90 aa).

The signal sequence occupies residues 1–18 (MKTLPVLVLSLTLLTVFS). Residues 28-50 (QAKQLLRSRRQDRPSKPGFPDEP) are disordered.

It is found in the secreted. This is an uncharacterized protein from Homo sapiens (Human).